Consider the following 249-residue polypeptide: MENLNHCPLEDIKVNPWKTPQSTARVITLRVEDPNEINNLLSINEIDNPNYILQAIMLANAFQNALVPTSTDFGDALRFSMAKGLEIANTITPMGAVVSYVDQNVTQTNNQVSVMINKVLEVLKTVLGVALSGSVIDQLTAAVTNTFTNLNTQKNEAWIFWGKETANQTNYTYNVLFAIQNAQTGGVMYCVPVGFEIKVSAVKEQVLFFTIQDSASYNVNIQSLKFAQPLVSSSQYPIADLTSAINGTL.

It belongs to the cyt1/cyt2 endotoxin family. Post-translationally, active after proteolytic processing.

Kills the larvae of dipteran insects by making pores in the epithelial cell membrane of the insect midgut. Acts on mosquitos and black flies. The protein is Type-1Aa cytolytic delta-endotoxin (cyt1Aa) of Bacillus thuringiensis subsp. morrisoni.